A 207-amino-acid polypeptide reads, in one-letter code: Small ribosomal subunit protein uS4c (207 aa).

The S4 RNA-binding domain maps to 92–156; sequence MRLDNILFRL…YQSIITKRIE (65 aa).

This sequence belongs to the universal ribosomal protein uS4 family. In terms of assembly, part of the 30S ribosomal subunit. Contacts protein S5. The interaction surface between S4 and S5 is involved in control of translational fidelity.

Its subcellular location is the plastid. It is found in the chloroplast. Its function is as follows. One of the primary rRNA binding proteins, it binds directly to 16S rRNA where it nucleates assembly of the body of the 30S subunit. Functionally, with S5 and S12 plays an important role in translational accuracy. The polypeptide is Small ribosomal subunit protein uS4c (rps4) (Equisetum sylvaticum (Wood horsetail)).